Here is a 436-residue protein sequence, read N- to C-terminus: Trigger factor (436 aa).

A PPIase FKBP-type domain is found at 161 to 255; sequence DDVAIIDFKT…VKEVREKQLP (95 aa).

The protein belongs to the FKBP-type PPIase family. Tig subfamily.

The protein resides in the cytoplasm. It carries out the reaction [protein]-peptidylproline (omega=180) = [protein]-peptidylproline (omega=0). Involved in protein export. Acts as a chaperone by maintaining the newly synthesized protein in an open conformation. Functions as a peptidyl-prolyl cis-trans isomerase. The chain is Trigger factor from Akkermansia muciniphila (strain ATCC BAA-835 / DSM 22959 / JCM 33894 / BCRC 81048 / CCUG 64013 / CIP 107961 / Muc).